A 486-amino-acid chain; its full sequence is MTIKHTQDLAQIRAMVPEMRRVKAIHFIGIGGAGMSGIAEVLLNEGYQISGSDLAANAVTDRLADKGATIFIGHEAHNVAHASVVVVSTAINEQNPEIQAAREKRIPIVRRAEMLAELMRFRHGIAVAGTHGKTTTTALVTQIYSEAGLDPTFVNGGLVKSAGTNARLGSSRILIAEADESDASFLHLQPMVTIVTNIEADHMDTYGGDFENLKQTFIDFLHNLPFYGQAILCIDDPVIRELIPRVSRQVITYGFSEDADVRIENYRQNGQQGQFTVVRKGKANLDITLNIPGRHNALNAAAAIAVATEDDIRDEAILRAMANTQGTGRRFDHLGEFETGNGVAMLVDDYGHHPTEVDVTIKAARNGWAEKRLVMIFQPHRYTRTRDLYDDFANVLEQVDVLLMLDVYAAGEKPIAGADGRSLCRTIRSRGKIDPIFVPDSQTLPSVLANILQDGDLVLTQGAGDVGKVARHLAALELNIGRMQQI.

ATP is bound at residue 129-135; it reads GTHGKTT.

It belongs to the MurCDEF family.

It is found in the cytoplasm. It catalyses the reaction UDP-N-acetyl-alpha-D-muramate + L-alanine + ATP = UDP-N-acetyl-alpha-D-muramoyl-L-alanine + ADP + phosphate + H(+). It participates in cell wall biogenesis; peptidoglycan biosynthesis. Functionally, cell wall formation. This is UDP-N-acetylmuramate--L-alanine ligase from Vibrio cholerae serotype O1 (strain ATCC 39541 / Classical Ogawa 395 / O395).